We begin with the raw amino-acid sequence, 249 residues long: MENILLGIVQGLTEFLPVSSSGHLAIFTAIFNKTPDVGYFAFLHLATFLAVVIFVKKEIFEIINGVFKKDEKYITLSLKLFVSMIPAAIVGIFFEDFIKSIFSETFFIGVFLAITGVFMLLSDKMDKNLKTITKIPYLDAFIIGIFQAFSVLPGISRSGSTLFAALLLGVKKEDAVKYSFLMSLPVIFGAGVLEMQKTVITKEYVYGFIVAFLTGILGLHLLKKMVIAGKLKFFGYYCFLASLFVIFYI.

The next 8 helical transmembrane spans lie at 11-31, 35-55, 74-94, 101-121, 135-155, 175-195, 208-228, and 229-249; these read GLTE…TAIF, PDVG…VIFV, ITLS…GIFF, IFSE…FMLL, IPYL…LPGI, AVKY…VLEM, FIVA…MVIA, and GKLK…IFYI.

Belongs to the UppP family.

The protein resides in the cell membrane. The enzyme catalyses di-trans,octa-cis-undecaprenyl diphosphate + H2O = di-trans,octa-cis-undecaprenyl phosphate + phosphate + H(+). In terms of biological role, catalyzes the dephosphorylation of undecaprenyl diphosphate (UPP). The polypeptide is Undecaprenyl-diphosphatase (Methanococcus vannielii (strain ATCC 35089 / DSM 1224 / JCM 13029 / OCM 148 / SB)).